The chain runs to 386 residues: uncharacterized protein (386 aa).

An N6-(pyridoxal phosphate)lysine modification is found at K185.

The protein belongs to the DegT/DnrJ/EryC1 family. It depends on pyridoxal 5'-phosphate as a cofactor.

This is an uncharacterized protein from Methanocaldococcus jannaschii (strain ATCC 43067 / DSM 2661 / JAL-1 / JCM 10045 / NBRC 100440) (Methanococcus jannaschii).